Here is a 975-residue protein sequence, read N- to C-terminus: Importin-11 (975 aa).

Methionine 1 carries the post-translational modification N-acetylmethionine. An Importin N-terminal domain is found at 28-100; the sequence is AEEQLKQWET…RAGLITNFNE (73 aa). HEAT repeat units follow at residues 123-160, 283-317, 318-356, 422-459, 473-509, 511-548, 555-593, 600-636, 640-677, 683-720, 731-773, 819-849, 850-887, and 957-974; these read RQWP…TLAS, QHPI…ERFI, VQCM…KMAF, QTLT…AVGL, WFKT…VKFK, DLRP…DFEF, PYLE…RVNV, GCLV…GLGA, NLYP…TLEN, PELL…SSTE, QSFY…ILPC, QEMD…KLSA, LALL…EDPE, and METV…FLQG. The residue at position 343 (serine 343) is a Phosphoserine.

It belongs to the importin beta family. As to quaternary structure, interacts with UBE2E3 and RPL12.

Its subcellular location is the cytoplasm. It is found in the nucleus. In terms of biological role, functions in nuclear protein import as nuclear transport receptor. Serves as receptor for nuclear localization signals (NLS) in cargo substrates. Is thought to mediate docking of the importin/substrate complex to the nuclear pore complex (NPC) through binding to nucleoporin and the complex is subsequently translocated through the pore by an energy requiring, Ran-dependent mechanism. At the nucleoplasmic side of the NPC, Ran binds to the importin, the importin/substrate complex dissociates and importin is re-exported from the nucleus to the cytoplasm where GTP hydrolysis releases Ran. The directionality of nuclear import is thought to be conferred by an asymmetric distribution of the GTP- and GDP-bound forms of Ran between the cytoplasm and nucleus. Mediates the nuclear import of RPL12, and of UBE2E3. This chain is Importin-11 (Ipo11), found in Mus musculus (Mouse).